Reading from the N-terminus, the 476-residue chain is Aspartyl/glutamyl-tRNA(Asn/Gln) amidotransferase subunit B (476 aa).

This sequence belongs to the GatB/GatE family. GatB subfamily. As to quaternary structure, heterotrimer of A, B and C subunits.

The catalysed reaction is L-glutamyl-tRNA(Gln) + L-glutamine + ATP + H2O = L-glutaminyl-tRNA(Gln) + L-glutamate + ADP + phosphate + H(+). The enzyme catalyses L-aspartyl-tRNA(Asn) + L-glutamine + ATP + H2O = L-asparaginyl-tRNA(Asn) + L-glutamate + ADP + phosphate + 2 H(+). Functionally, allows the formation of correctly charged Asn-tRNA(Asn) or Gln-tRNA(Gln) through the transamidation of misacylated Asp-tRNA(Asn) or Glu-tRNA(Gln) in organisms which lack either or both of asparaginyl-tRNA or glutaminyl-tRNA synthetases. The reaction takes place in the presence of glutamine and ATP through an activated phospho-Asp-tRNA(Asn) or phospho-Glu-tRNA(Gln). This chain is Aspartyl/glutamyl-tRNA(Asn/Gln) amidotransferase subunit B, found in Lactobacillus helveticus (strain DPC 4571).